Reading from the N-terminus, the 243-residue chain is PF03932 family protein CutC (243 aa).

This sequence belongs to the CutC family.

It localises to the cytoplasm. This is PF03932 family protein CutC from Histophilus somni (strain 2336) (Haemophilus somnus).